We begin with the raw amino-acid sequence, 291 residues long: Hydroxysteroid 11-beta-dehydrogenase 1-like protein B (291 aa).

An N-terminal signal peptide occupies residues 1–17 (MAGVILLLLSLCVGYIA). Residues 40 to 66 (GSST…TARR), 91 to 92 (DM), and 118 to 120 (NHI) each bind NADP(+). Residue S170 coordinates substrate. Y183 functions as the Proton acceptor in the catalytic mechanism. NADP(+) is bound by residues 183–187 (YCASK) and 216–222 (GYIDTEN).

The protein belongs to the short-chain dehydrogenases/reductases (SDR) family.

It localises to the secreted. It carries out the reaction cortisone + NADPH + H(+) = cortisol + NADP(+). Its function is as follows. Unidirectional NADP(+)-dependent cortisol dehydrogenase (in vitro). The polypeptide is Hydroxysteroid 11-beta-dehydrogenase 1-like protein B (hsd11b1l-b) (Xenopus laevis (African clawed frog)).